The sequence spans 179 residues: Large ribosomal subunit protein uL5 (179 aa).

The protein belongs to the universal ribosomal protein uL5 family. As to quaternary structure, part of the 50S ribosomal subunit; part of the 5S rRNA/L5/L18/L25 subcomplex. Contacts the 5S rRNA and the P site tRNA. Forms a bridge to the 30S subunit in the 70S ribosome.

In terms of biological role, this is one of the proteins that bind and probably mediate the attachment of the 5S RNA into the large ribosomal subunit, where it forms part of the central protuberance. In the 70S ribosome it contacts protein S13 of the 30S subunit (bridge B1b), connecting the 2 subunits; this bridge is implicated in subunit movement. Contacts the P site tRNA; the 5S rRNA and some of its associated proteins might help stabilize positioning of ribosome-bound tRNAs. The chain is Large ribosomal subunit protein uL5 from Exiguobacterium sibiricum (strain DSM 17290 / CCUG 55495 / CIP 109462 / JCM 13490 / 255-15).